A 598-amino-acid chain; its full sequence is Elongation factor 4 (598 aa).

One can recognise a tr-type G domain in the interval 4–186 (DHIRNFSIIA…AIVKRVPPPK (183 aa)). GTP contacts are provided by residues 16 to 21 (DHGKST) and 133 to 136 (NKID).

It belongs to the TRAFAC class translation factor GTPase superfamily. Classic translation factor GTPase family. LepA subfamily.

It is found in the cell inner membrane. It catalyses the reaction GTP + H2O = GDP + phosphate + H(+). In terms of biological role, required for accurate and efficient protein synthesis under certain stress conditions. May act as a fidelity factor of the translation reaction, by catalyzing a one-codon backward translocation of tRNAs on improperly translocated ribosomes. Back-translocation proceeds from a post-translocation (POST) complex to a pre-translocation (PRE) complex, thus giving elongation factor G a second chance to translocate the tRNAs correctly. Binds to ribosomes in a GTP-dependent manner. In Magnetococcus marinus (strain ATCC BAA-1437 / JCM 17883 / MC-1), this protein is Elongation factor 4.